We begin with the raw amino-acid sequence, 551 residues long: Dihydroxy-acid dehydratase (551 aa).

Asp-78 serves as a coordination point for Mg(2+). Cys-119 lines the [2Fe-2S] cluster pocket. Mg(2+) is bound by residues Asp-120 and Lys-121. Lys-121 carries the post-translational modification N6-carboxylysine. Cys-191 provides a ligand contact to [2Fe-2S] cluster. Residue Glu-441 coordinates Mg(2+). Ser-467 acts as the Proton acceptor in catalysis.

This sequence belongs to the IlvD/Edd family. Homodimer. [2Fe-2S] cluster is required as a cofactor. It depends on Mg(2+) as a cofactor.

The enzyme catalyses (2R)-2,3-dihydroxy-3-methylbutanoate = 3-methyl-2-oxobutanoate + H2O. It carries out the reaction (2R,3R)-2,3-dihydroxy-3-methylpentanoate = (S)-3-methyl-2-oxopentanoate + H2O. The protein operates within amino-acid biosynthesis; L-isoleucine biosynthesis; L-isoleucine from 2-oxobutanoate: step 3/4. It participates in amino-acid biosynthesis; L-valine biosynthesis; L-valine from pyruvate: step 3/4. Its function is as follows. Functions in the biosynthesis of branched-chain amino acids. Catalyzes the dehydration of (2R,3R)-2,3-dihydroxy-3-methylpentanoate (2,3-dihydroxy-3-methylvalerate) into 2-oxo-3-methylpentanoate (2-oxo-3-methylvalerate) and of (2R)-2,3-dihydroxy-3-methylbutanoate (2,3-dihydroxyisovalerate) into 2-oxo-3-methylbutanoate (2-oxoisovalerate), the penultimate precursor to L-isoleucine and L-valine, respectively. The polypeptide is Dihydroxy-acid dehydratase (Pyrococcus furiosus (strain ATCC 43587 / DSM 3638 / JCM 8422 / Vc1)).